Consider the following 432-residue polypeptide: Histidinol dehydrogenase (432 aa).

Substrate-binding residues include Ser240, Gln262, and His265. Gln262 and His265 together coordinate Zn(2+). Residues Glu330 and His331 each act as proton acceptor in the active site. The substrate site is built by His331, Asp364, Glu418, and His423. Asp364 contributes to the Zn(2+) binding site. His423 provides a ligand contact to Zn(2+).

Belongs to the histidinol dehydrogenase family. Zn(2+) is required as a cofactor.

The enzyme catalyses L-histidinol + 2 NAD(+) + H2O = L-histidine + 2 NADH + 3 H(+). It functions in the pathway amino-acid biosynthesis; L-histidine biosynthesis; L-histidine from 5-phospho-alpha-D-ribose 1-diphosphate: step 9/9. Its function is as follows. Catalyzes the sequential NAD-dependent oxidations of L-histidinol to L-histidinaldehyde and then to L-histidine. The sequence is that of Histidinol dehydrogenase from Wolinella succinogenes (strain ATCC 29543 / DSM 1740 / CCUG 13145 / JCM 31913 / LMG 7466 / NCTC 11488 / FDC 602W) (Vibrio succinogenes).